The sequence spans 643 residues: Phosphomethylpyrimidine synthase (643 aa).

Residues asparagine 248, methionine 277, tyrosine 306, histidine 342, 362 to 364 (SRG), 403 to 406 (DGLR), and glutamate 442 each bind substrate. Position 446 (histidine 446) interacts with Zn(2+). Tyrosine 469 contributes to the substrate binding site. Histidine 510 contacts Zn(2+). The [4Fe-4S] cluster site is built by cysteine 590, cysteine 593, and cysteine 598.

This sequence belongs to the ThiC family. Homodimer. Requires [4Fe-4S] cluster as cofactor.

The catalysed reaction is 5-amino-1-(5-phospho-beta-D-ribosyl)imidazole + S-adenosyl-L-methionine = 4-amino-2-methyl-5-(phosphooxymethyl)pyrimidine + CO + 5'-deoxyadenosine + formate + L-methionine + 3 H(+). Its pathway is cofactor biosynthesis; thiamine diphosphate biosynthesis. Its function is as follows. Catalyzes the synthesis of the hydroxymethylpyrimidine phosphate (HMP-P) moiety of thiamine from aminoimidazole ribotide (AIR) in a radical S-adenosyl-L-methionine (SAM)-dependent reaction. This is Phosphomethylpyrimidine synthase from Burkholderia multivorans (strain ATCC 17616 / 249).